The sequence spans 580 residues: Type II methyltransferase M.BanIII (580 aa).

This sequence belongs to the N(4)/N(6)-methyltransferase family.

The catalysed reaction is a 2'-deoxyadenosine in DNA + S-adenosyl-L-methionine = an N(6)-methyl-2'-deoxyadenosine in DNA + S-adenosyl-L-homocysteine + H(+). Its function is as follows. A gamma subtype methylase, recognizes the double-stranded sequence 5'-ATCGAT-3', methylates A-5 on both strands, and protects the DNA from cleavage by the BanIII endonuclease. In Aneurinibacillus aneurinilyticus (Bacillus aneurinolyticus), this protein is Type II methyltransferase M.BanIII (banIIIM).